Reading from the N-terminus, the 377-residue chain is Histidinol-phosphate aminotransferase (377 aa).

Lys-232 is modified (N6-(pyridoxal phosphate)lysine).

The protein belongs to the class-II pyridoxal-phosphate-dependent aminotransferase family. Histidinol-phosphate aminotransferase subfamily. In terms of assembly, homodimer. Requires pyridoxal 5'-phosphate as cofactor.

The catalysed reaction is L-histidinol phosphate + 2-oxoglutarate = 3-(imidazol-4-yl)-2-oxopropyl phosphate + L-glutamate. It participates in amino-acid biosynthesis; L-histidine biosynthesis; L-histidine from 5-phospho-alpha-D-ribose 1-diphosphate: step 7/9. The polypeptide is Histidinol-phosphate aminotransferase (Mycobacterium sp. (strain JLS)).